A 230-amino-acid chain; its full sequence is Type II restriction enzyme Eco47I (230 aa).

The enzyme catalyses Endonucleolytic cleavage of DNA to give specific double-stranded fragments with terminal 5'-phosphates.. Functionally, a P subtype restriction enzyme that recognizes the double-stranded sequence 5'-GGWCC-3' and cleaves after G-1. The protein is Type II restriction enzyme Eco47I of Escherichia coli.